The chain runs to 251 residues: uncharacterized protein (251 aa).

This is an uncharacterized protein from Methanocaldococcus jannaschii (strain ATCC 43067 / DSM 2661 / JAL-1 / JCM 10045 / NBRC 100440) (Methanococcus jannaschii).